A 358-amino-acid chain; its full sequence is 4-hydroxy-3-methylbut-2-en-1-yl diphosphate synthase (flavodoxin) (358 aa).

[4Fe-4S] cluster contacts are provided by cysteine 270, cysteine 273, cysteine 305, and glutamate 312.

Belongs to the IspG family. Requires [4Fe-4S] cluster as cofactor.

The catalysed reaction is (2E)-4-hydroxy-3-methylbut-2-enyl diphosphate + oxidized [flavodoxin] + H2O + 2 H(+) = 2-C-methyl-D-erythritol 2,4-cyclic diphosphate + reduced [flavodoxin]. Its pathway is isoprenoid biosynthesis; isopentenyl diphosphate biosynthesis via DXP pathway; isopentenyl diphosphate from 1-deoxy-D-xylulose 5-phosphate: step 5/6. Its function is as follows. Converts 2C-methyl-D-erythritol 2,4-cyclodiphosphate (ME-2,4cPP) into 1-hydroxy-2-methyl-2-(E)-butenyl 4-diphosphate. This chain is 4-hydroxy-3-methylbut-2-en-1-yl diphosphate synthase (flavodoxin), found in Ruthia magnifica subsp. Calyptogena magnifica.